The chain runs to 148 residues: Macrodomain Ter protein (148 aa).

This sequence belongs to the MatP family. As to quaternary structure, homodimer.

The protein resides in the cytoplasm. In terms of biological role, required for spatial organization of the terminus region of the chromosome (Ter macrodomain) during the cell cycle. Prevents early segregation of duplicated Ter macrodomains during cell division. Binds specifically to matS, which is a 13 bp signature motif repeated within the Ter macrodomain. The chain is Macrodomain Ter protein from Haemophilus influenzae (strain PittGG).